The following is a 519-amino-acid chain: Cytosol aminopeptidase (519 aa).

N6-succinyllysine is present on K45. S54 bears the Phosphoserine mark. An N6-succinyllysine mark is found at K61 and K103. A phosphoserine mark is found at S180 and S194. The Zn(2+) site is built by L202 and M203. N6-acetyllysine; alternate is present on K221. K221 carries the N6-succinyllysine; alternate modification. S238 is subject to Phosphoserine. Positions 282 and 287 each coordinate Zn(2+). Positions 282, 287, 292, and 294 each coordinate substrate. Mg(2+) is bound at residue D287. K294 is an active-site residue. R303, D305, D364, and E366 together coordinate Zn(2+). D305 and D364 together coordinate substrate. Positions 364 and 366 each coordinate Mg(2+). R368 is an active-site residue. K455 carries the post-translational modification N6-acetyllysine; alternate. K455 carries the post-translational modification N6-succinyllysine; alternate. Residue K476 is modified to N6-succinyllysine. K489 carries the post-translational modification N6-acetyllysine; alternate. K489 is modified (N6-succinyllysine; alternate).

This sequence belongs to the peptidase M17 family. Homohexamer. Zn(2+) serves as cofactor. It depends on Mn(2+) as a cofactor.

It localises to the cytoplasm. It catalyses the reaction Release of an N-terminal amino acid, Xaa-|-Yaa-, in which Xaa is preferably Leu, but may be other amino acids including Pro although not Arg or Lys, and Yaa may be Pro. Amino acid amides and methyl esters are also readily hydrolyzed, but rates on arylamides are exceedingly low.. It carries out the reaction an S-substituted L-cysteinylglycine + H2O = an S-substituted L-cysteine + glycine. The catalysed reaction is L-cysteinylglycine + H2O = L-cysteine + glycine. The enzyme catalyses S-benzyl-L-cysteinylglycine + H2O = S-benzyl-L-cysteine + glycine. It catalyses the reaction Release of N-terminal proline from a peptide.. Its function is as follows. Cytosolic metallopeptidase that catalyzes the removal of unsubstituted N-terminal hydrophobic amino acids from various peptides. The presence of Zn(2+) ions is essential for the peptidase activity, and the association with other cofactors can modulate the substrate spectificity of the enzyme. For instance, in the presence of Mn(2+), it displays a specific Cys-Gly hydrolyzing activity of Cys-Gly-S-conjugates. Involved in the metabolism of glutathione and in the degradation of glutathione S-conjugates, which may play a role in the control of the cell redox status. The protein is Cytosol aminopeptidase of Mus musculus (Mouse).